A 205-amino-acid polypeptide reads, in one-letter code: RNA pyrophosphohydrolase (205 aa).

Residues 6–149 (GFRPNVGIVL…KRGVYARALR (144 aa)) form the Nudix hydrolase domain. The Nudix box motif lies at 38–59 (GGMNTDETPVEAMYRELREETG). The disordered stretch occupies residues 177-205 (PGSSAAGHDSPRKRPRKRSGARPMRINND). The segment covering 187–196 (PRKRPRKRSG) has biased composition (basic residues).

Belongs to the Nudix hydrolase family. RppH subfamily. The cofactor is a divalent metal cation.

Accelerates the degradation of transcripts by removing pyrophosphate from the 5'-end of triphosphorylated RNA, leading to a more labile monophosphorylated state that can stimulate subsequent ribonuclease cleavage. The chain is RNA pyrophosphohydrolase from Xanthomonas oryzae pv. oryzae (strain MAFF 311018).